The primary structure comprises 203 residues: Transcriptional regulator GfcR 2 (203 aa).

This sequence belongs to the purine/pyrimidine phosphoribosyltransferase family. GfcR subfamily.

The protein is Transcriptional regulator GfcR 2 of Methanosarcina acetivorans (strain ATCC 35395 / DSM 2834 / JCM 12185 / C2A).